We begin with the raw amino-acid sequence, 423 residues long: Serine/threonine-protein kinase ppk25 (423 aa).

A phosphoserine mark is found at Ser-36 and Ser-38. The 253-residue stretch at 53–305 (WIIKKTIGAG…LEQAAKFPWL (253 aa)) folds into the Protein kinase domain. ATP contacts are provided by residues 59 to 67 (IGAGSMGKV) and Lys-82. Asp-175 serves as the catalytic Proton acceptor.

This sequence belongs to the protein kinase superfamily. Ser/Thr protein kinase family.

It is found in the cytoplasm. The enzyme catalyses L-seryl-[protein] + ATP = O-phospho-L-seryl-[protein] + ADP + H(+). It catalyses the reaction L-threonyl-[protein] + ATP = O-phospho-L-threonyl-[protein] + ADP + H(+). The polypeptide is Serine/threonine-protein kinase ppk25 (ppk25) (Schizosaccharomyces pombe (strain 972 / ATCC 24843) (Fission yeast)).